Reading from the N-terminus, the 972-residue chain is Isoleucine--tRNA ligase (972 aa).

The short motif at 63–73 is the 'HIGH' region element; the sequence is PYANGNIHIGH. E603 contributes to the L-isoleucyl-5'-AMP binding site. A 'KMSKS' region motif is present at residues 644–648; it reads KMSKS. K647 is a binding site for ATP.

This sequence belongs to the class-I aminoacyl-tRNA synthetase family. IleS type 1 subfamily. As to quaternary structure, monomer.

Its subcellular location is the cytoplasm. The enzyme catalyses tRNA(Ile) + L-isoleucine + ATP = L-isoleucyl-tRNA(Ile) + AMP + diphosphate. Its function is as follows. Catalyzes the attachment of isoleucine to tRNA(Ile). As IleRS can inadvertently accommodate and process structurally similar amino acids such as valine, to avoid such errors it has two additional distinct tRNA(Ile)-dependent editing activities. One activity is designated as 'pretransfer' editing and involves the hydrolysis of activated Val-AMP. The other activity is designated 'posttransfer' editing and involves deacylation of mischarged Val-tRNA(Ile). The polypeptide is Isoleucine--tRNA ligase (Brucella melitensis biotype 1 (strain ATCC 23456 / CCUG 17765 / NCTC 10094 / 16M)).